The primary structure comprises 405 residues: Zinc finger protein ubi-d4 (405 aa).

Disordered regions lie at residues 80 to 147, 165 to 194, 210 to 230, and 248 to 280; these read RKKR…GEFP, DDLDDEDYEEDTPKRRGKGKAKGKGVGGAR, ACDNSYKQKHSLKPPDRVCGK, and AEEEGDDKDDSQPPTPVSQRSEEQKSKKGPDGL. Composition is skewed to basic and acidic residues over residues 100–110 and 126–140; these read PDTDQTLKKEG and DPLEKRSLPDPRMDD. Over residues 165–174 the composition is skewed to acidic residues; sequence DDLDDEDYEE. The C2H2-type; atypical zinc-finger motif lies at 209–246; it reads YACDNSYKQKHSLKPPDRVCGKRYKNRPGLSYHYAHSH. Positions 267–277 are enriched in basic and acidic residues; that stretch reads RSEEQKSKKGP. 2 PHD-type zinc fingers span residues 284–344 and 341–391; these read NNYC…CKCC and CKCC…CLDL.

Belongs to the requiem/DPF family.

Its subcellular location is the cytoplasm. The protein resides in the nucleus. May be a transcription factor required for the apoptosis response following survival factor withdrawal from myeloid cells. Might also have a role in the development and maturation of lymphoid cells. The chain is Zinc finger protein ubi-d4 (REQ) from Gallus gallus (Chicken).